Here is a 346-residue protein sequence, read N- to C-terminus: 3 beta-hydroxysteroid dehydrogenase/Delta 5--&gt;4-isomerase (346 aa).

Tyr-147 acts as the Proton acceptor in catalysis. Lys-151 lines the NAD(+) pocket.

This sequence belongs to the 3-beta-HSD family.

The catalysed reaction is a 3beta-hydroxy-Delta(5)-steroid + NAD(+) = a 3-oxo-Delta(5)-steroid + NADH + H(+). The enzyme catalyses a 3-oxo-Delta(5)-steroid = a 3-oxo-Delta(4)-steroid. Its pathway is lipid metabolism; steroid biosynthesis. Catalyzes the oxidative conversion of Delta(5)-ene-3-beta-hydroxy steroid, and the oxidative conversion of ketosteroids. The 3-beta-HSD enzymatic system plays a crucial role in the biosynthesis of all classes of hormonal steroids. During viral infection, steroid production contributes to virulence by inhibiting the host inflammatory response. This is 3 beta-hydroxysteroid dehydrogenase/Delta 5--&gt;4-isomerase (OPG174) from Homo sapiens (Human).